Consider the following 851-residue polypeptide: Venom phosphodiesterase (851 aa).

A signal peptide spans 1 to 23 (MIQQKVLFISLVAVALGLGLGLG). 2 consecutive SMB domains span residues 30–73 (PQVS…VLPT) and 74–118 (QSWS…GETS). 16 disulfides stabilise this stretch: cysteine 34–cysteine 38, cysteine 34–cysteine 51, cysteine 38–cysteine 69, cysteine 49–cysteine 51, cysteine 49–cysteine 62, cysteine 55–cysteine 61, cysteine 62–cysteine 69, cysteine 78–cysteine 83, cysteine 78–cysteine 95, cysteine 83–cysteine 113, cysteine 93–cysteine 95, cysteine 93–cysteine 106, cysteine 99–cysteine 105, cysteine 106–cysteine 113, cysteine 124–cysteine 170, and cysteine 132–cysteine 344. Residue asparagine 39 is glycosylated (N-linked (GlcNAc...) asparagine). A Cell attachment site motif is present at residues 58–60 (RQA). 2 residues coordinate a divalent metal cation: aspartate 147 and threonine 185. The active-site AMP-threonine intermediate is the threonine 185. N-linked (GlcNAc...) asparagine glycosylation is found at asparagine 216, asparagine 259, and asparagine 270. An AMP-binding site is contributed by lysine 271. Aspartate 305, histidine 309, aspartate 352, and histidine 353 together coordinate a divalent metal cation. Histidine 309 is an AMP binding site. 6 cysteine pairs are disulfide-bonded: cysteine 360–cysteine 457, cysteine 408–cysteine 793, cysteine 541–cysteine 599, cysteine 554–cysteine 654, cysteine 556–cysteine 639, and cysteine 762–cysteine 772. Residue asparagine 405 is glycosylated (N-linked (GlcNAc...) asparagine). Histidine 462 serves as a coordination point for a divalent metal cation. Residues asparagine 512, asparagine 594, and asparagine 745 are each glycosylated (N-linked (GlcNAc...) asparagine).

The protein belongs to the nucleotide pyrophosphatase/phosphodiesterase family. Monomer cleaved in two subunits; disulfide-linked. Is synthesized as a single-chain protein and is subsequently cleaved to form a two-subunit protein held together with disulfide bonds. Requires a divalent metal cation as cofactor. Expressed by venom gland.

The protein resides in the secreted. It carries out the reaction ADP + H2O = AMP + phosphate + H(+). Its function is as follows. Hydrolyzes ADP with high activity. Shows weak or no activity on 5'-AMP, 5'-GMP, 3'-AMP, ATP, cAMP, and cGMP. Is devoid of monophosphatase and proteinase activities. Dose-dependently inhibits platelet aggregation induced by ADP (IC(50)=0.99 uM) and collagen (IC(50)=1.4 uM). The chain is Venom phosphodiesterase from Macrovipera lebetinus (Levantine viper).